The primary structure comprises 193 residues: Holliday junction branch migration complex subunit RuvA (193 aa).

The tract at residues 1-64 is domain I; sequence MIGRIAGILL…EDAHLLYGFL (64 aa). Residues 65-139 are domain II; the sequence is TPQERTTFRE…GKLGADLGAL (75 aa). Residues 139 to 143 form a flexible linker region; the sequence is LAGAA. Residues 144-193 are domain III; sequence SQSDHAADILNALVALGYSEKEGLAAIKNVPAGTGVSEGIKLALKALSKV.

The protein belongs to the RuvA family. In terms of assembly, homotetramer. Forms an RuvA(8)-RuvB(12)-Holliday junction (HJ) complex. HJ DNA is sandwiched between 2 RuvA tetramers; dsDNA enters through RuvA and exits via RuvB. An RuvB hexamer assembles on each DNA strand where it exits the tetramer. Each RuvB hexamer is contacted by two RuvA subunits (via domain III) on 2 adjacent RuvB subunits; this complex drives branch migration. In the full resolvosome a probable DNA-RuvA(4)-RuvB(12)-RuvC(2) complex forms which resolves the HJ.

It is found in the cytoplasm. In terms of biological role, the RuvA-RuvB-RuvC complex processes Holliday junction (HJ) DNA during genetic recombination and DNA repair, while the RuvA-RuvB complex plays an important role in the rescue of blocked DNA replication forks via replication fork reversal (RFR). RuvA specifically binds to HJ cruciform DNA, conferring on it an open structure. The RuvB hexamer acts as an ATP-dependent pump, pulling dsDNA into and through the RuvAB complex. HJ branch migration allows RuvC to scan DNA until it finds its consensus sequence, where it cleaves and resolves the cruciform DNA. This is Holliday junction branch migration complex subunit RuvA from Burkholderia ambifaria (strain ATCC BAA-244 / DSM 16087 / CCUG 44356 / LMG 19182 / AMMD) (Burkholderia cepacia (strain AMMD)).